The chain runs to 352 residues: Probable dual-specificity RNA methyltransferase RlmN (352 aa).

Glu99 acts as the Proton acceptor in catalysis. The 221-residue stretch at 105-325 (EGDRATLCIS…ESHGYTCTIR (221 aa)) folds into the Radical SAM core domain. Cys112 and Cys336 are disulfide-bonded. [4Fe-4S] cluster is bound by residues Cys119, Cys123, and Cys126. S-adenosyl-L-methionine-binding positions include 164-165 (GE), Ser196, 217-219 (SLH), and His293. Cys336 serves as the catalytic S-methylcysteine intermediate.

Belongs to the radical SAM superfamily. RlmN family. [4Fe-4S] cluster serves as cofactor.

Its subcellular location is the cytoplasm. The catalysed reaction is adenosine(2503) in 23S rRNA + 2 reduced [2Fe-2S]-[ferredoxin] + 2 S-adenosyl-L-methionine = 2-methyladenosine(2503) in 23S rRNA + 5'-deoxyadenosine + L-methionine + 2 oxidized [2Fe-2S]-[ferredoxin] + S-adenosyl-L-homocysteine. The enzyme catalyses adenosine(37) in tRNA + 2 reduced [2Fe-2S]-[ferredoxin] + 2 S-adenosyl-L-methionine = 2-methyladenosine(37) in tRNA + 5'-deoxyadenosine + L-methionine + 2 oxidized [2Fe-2S]-[ferredoxin] + S-adenosyl-L-homocysteine. In terms of biological role, specifically methylates position 2 of adenine 2503 in 23S rRNA and position 2 of adenine 37 in tRNAs. This chain is Probable dual-specificity RNA methyltransferase RlmN, found in Porphyromonas gingivalis (strain ATCC 33277 / DSM 20709 / CIP 103683 / JCM 12257 / NCTC 11834 / 2561).